The sequence spans 246 residues: tRNA (guanine-N(1)-)-methyltransferase (246 aa).

S-adenosyl-L-methionine is bound by residues G114 and 134 to 139 (IGDYIL).

It belongs to the RNA methyltransferase TrmD family. Homodimer.

The protein localises to the cytoplasm. The catalysed reaction is guanosine(37) in tRNA + S-adenosyl-L-methionine = N(1)-methylguanosine(37) in tRNA + S-adenosyl-L-homocysteine + H(+). Functionally, specifically methylates guanosine-37 in various tRNAs. This is tRNA (guanine-N(1)-)-methyltransferase from Coxiella burnetii (strain RSA 331 / Henzerling II).